We begin with the raw amino-acid sequence, 337 residues long: Inner membrane protein YhjD (337 aa).

Residues 1–29 (MTQENEIKRPIQDLEHEPIKPLDNSEKGS) show a composition bias toward basic and acidic residues. The tract at residues 1–31 (MTQENEIKRPIQDLEHEPIKPLDNSEKGSKV) is disordered. Residues 1-74 (MTQENEIKRP…LGNQFGAAIT (74 aa)) are Cytoplasmic-facing. Residues 75–97 (YFSFLSMIPILMVSFAAGGFVLA) traverse the membrane as a helical segment. The Periplasmic segment spans residues 98 to 133 (SHPMLLQDIFDKILQNISDPTLAATLKNTINTAVQQ). The chain crosses the membrane as a helical span at residues 134-156 (RTTVGLVGLAVALYSGINWMGNL). Residues 157–185 (REAIRAQSRDVWERSPQDQEKFWVKYLRD) are Cytoplasmic-facing. A helical membrane pass occupies residues 186–208 (FISLIGLLIALIVTLSITSVAGS). Over 209–227 (AQQMIISALHLNSIEWLKP) the chain is Periplasmic. The helical transmembrane segment at 228 to 250 (TWRLIGLAISIFANYLLFFWIFW) threads the bilayer. Residues 251 to 261 (RLPRHRPRKKA) lie on the Cytoplasmic side of the membrane. Residues 262–284 (LIRGTFLAAIGFEVIKIVMTYTL) form a helical membrane-spanning segment. Residues 285-298 (PSLMKSPSGAAFGS) are Periplasmic-facing. A helical transmembrane segment spans residues 299–321 (VLGLMAFFYFFARLTLFCAAWIA). The Cytoplasmic portion of the chain corresponds to 322-337 (TAEYKDDPRMPGKTQP).

It localises to the cell inner membrane. This Escherichia coli (strain K12) protein is Inner membrane protein YhjD (yhjD).